Consider the following 1222-residue polypeptide: Chitin synthase 4 (1222 aa).

Disordered stretches follow at residues 1–101 (MSLP…ERNR) and 138–200 (TERT…KRIE). Composition is skewed to polar residues over residues 11 to 24 (QAYNQRSVYRNSPS) and 42 to 77 (NQASHQRGKSGSSFAESIGINSNTESMPLSPTSPDG). Over residues 182–196 (SGKIKRKSRRHSKPP) the composition is skewed to basic residues. A run of 2 helical transmembrane segments spans residues 205–225 (PPTFWNVYCAIVTFWAPGFIM) and 243–263 (MGLISIILIIMAIVGFLTFGF). Residues Asn378, Asn418, and Asn440 are each glycosylated (N-linked (GlcNAc...) asparagine). The chain crosses the membrane as a helical span at residues 513–533 (ALILSVVGVRFFLAIIFQWFI). A disordered region spans residues 576–630 (TVYGSSDRSSKRASFLPTTSRFSSVGGPDIRSQGGRRMPTTMASQSTSNQLLTPN). Positions 616-630 (TMASQSTSNQLLTPN) are enriched in polar residues. N-linked (GlcNAc...) asparagine glycosylation is found at Asn637 and Asn1030. Transmembrane regions (helical) follow at residues 1055-1075 (FIIFVELVGTLVLPAAIAFTF), 1089-1109 (IIPLVLLGLILGLPGLLVIIT), and 1113-1133 (WSYIVWMLIYLLALPIWNFVL). Residues 1202 to 1222 (GGQTWTSPPGHQYNEEYYSDA) form a disordered region.

It belongs to the chitin synthase family. Class IV subfamily.

The protein localises to the cell membrane. It catalyses the reaction [(1-&gt;4)-N-acetyl-beta-D-glucosaminyl](n) + UDP-N-acetyl-alpha-D-glucosamine = [(1-&gt;4)-N-acetyl-beta-D-glucosaminyl](n+1) + UDP + H(+). Its function is as follows. Polymerizes chitin, a structural polymer of the cell wall and septum, by transferring the sugar moiety of UDP-GlcNAc to the non-reducing end of the growing chitin polymer. Shows additive effects in septum formation with CHS1, CHS2, CHS3A, CHS5, CHS6 and CHS7. Regulates conidiation. Involved in virulence and mediates mycotoxin deoxinivalenol (DON) biosynthesis via the regulation of the expression of TRI4, TRI5 and TRI6. This is Chitin synthase 4 from Gibberella zeae (strain ATCC MYA-4620 / CBS 123657 / FGSC 9075 / NRRL 31084 / PH-1) (Wheat head blight fungus).